The sequence spans 103 residues: Large ribosomal subunit protein bL21 (103 aa).

It belongs to the bacterial ribosomal protein bL21 family. In terms of assembly, part of the 50S ribosomal subunit. Contacts protein L20.

In terms of biological role, this protein binds to 23S rRNA in the presence of protein L20. In Yersinia enterocolitica serotype O:8 / biotype 1B (strain NCTC 13174 / 8081), this protein is Large ribosomal subunit protein bL21.